The chain runs to 228 residues: U1 small nuclear ribonucleoprotein C-2 (228 aa).

The Matrin-type zinc-finger motif lies at 4 to 36; sequence YYCDYCDTYLTHDSPSVRKQHNAGYKHKANVRT. The interval 105–228 is disordered; that stretch reads PGVRPPILPA…SYALPSEGNH (124 aa). Composition is skewed to pro residues over residues 107–156 and 164–175; these read VRPP…PPGS and LPRPPTLPPPTS. Residues 178 to 190 are compositionally biased toward low complexity; it reads PGAPIPNSAAPPA. A compositionally biased stretch (pro residues) spans 196–214; that stretch reads PPAPAGPTSGAPPAPPTAP.

This sequence belongs to the U1 small nuclear ribonucleoprotein C family. In terms of assembly, U1 snRNP is composed of the 7 core Sm proteins B/B', D1, D2, D3, E, F and G that assemble in a heptameric protein ring on the Sm site of the small nuclear RNA to form the core snRNP, and at least 3 U1 snRNP-specific proteins U1-70K, U1-A and U1-C. U1-C interacts with U1 snRNA and the 5' splice-site region of the pre-mRNA.

The protein localises to the nucleus. Its function is as follows. Component of the spliceosomal U1 snRNP, which is essential for recognition of the pre-mRNA 5' splice-site and the subsequent assembly of the spliceosome. U1-C is directly involved in initial 5' splice-site recognition for both constitutive and regulated alternative splicing. The interaction with the 5' splice-site seems to precede base-pairing between the pre-mRNA and the U1 snRNA. Stimulates commitment or early (E) complex formation by stabilizing the base pairing of the 5' end of the U1 snRNA and the 5' splice-site region. In Sorghum bicolor (Sorghum), this protein is U1 small nuclear ribonucleoprotein C-2.